Here is a 764-residue protein sequence, read N- to C-terminus: Polyribonucleotide nucleotidyltransferase (764 aa).

The Mg(2+) site is built by Asp-541 and Asp-547. Residues 607–666 (PRVTAIKIPVDKIGEVIGPKGKVINQITEDTGANISIEDDGTVFVGATDGPSAQAAIDAI) form the KH domain. Positions 678 to 747 (GERFLGTVVK…NRGKISLVPV (70 aa)) constitute an S1 motif domain.

It belongs to the polyribonucleotide nucleotidyltransferase family. Requires Mg(2+) as cofactor.

Its subcellular location is the cytoplasm. The catalysed reaction is RNA(n+1) + phosphate = RNA(n) + a ribonucleoside 5'-diphosphate. Involved in mRNA degradation. Catalyzes the phosphorolysis of single-stranded polyribonucleotides processively in the 3'- to 5'-direction. The chain is Polyribonucleotide nucleotidyltransferase from Nocardia farcinica (strain IFM 10152).